The primary structure comprises 140 residues: Small ribosomal subunit protein uS11 (140 aa).

Residues 116 to 140 (GRVEDVTPIPHDGTRPKGGRRGRRV) form a disordered region.

It belongs to the universal ribosomal protein uS11 family. In terms of assembly, part of the 30S ribosomal subunit.

Located on the platform of the 30S subunit. This Thermococcus kodakarensis (strain ATCC BAA-918 / JCM 12380 / KOD1) (Pyrococcus kodakaraensis (strain KOD1)) protein is Small ribosomal subunit protein uS11.